The chain runs to 1006 residues: Pentatricopeptide repeat-containing protein At1g30610, chloroplastic (1006 aa).

Residues 1 to 40 (MAVTISTNAFVNASLLDESRNSFWRPLFHQPYYNCRRVVR) constitute a chloroplast transit peptide. Disordered regions lie at residues 180–219 (LSKS…ERGS) and 248–292 (SSVA…IARG). Basic and acidic residues predominate over residues 194–219 (ESFRKRYSKQEYHRSSDTSRGIERGS). A compositionally biased stretch (polar residues) spans 254–263 (WSNSGESSVT). A compositionally biased stretch (basic and acidic residues) spans 265-284 (PKDESFRRRYSKQEHHRSSD). PPR repeat units lie at residues 468 to 502 (TDYT…DRYK), 506 to 536 (IRII…MLLQ), 542 to 572 (DMVA…MRSP), 592 to 626 (DVVV…GQKP), 627 to 657 (SPVT…MQKS), 661 to 695 (NALA…GIVG), 759 to 789 (LVVT…MKKV), 793 to 827 (NLVT…GNHI), 840 to 874 (DTYT…GYHF), and 875 to 909 (NAKR…NRIP).

It belongs to the PPR family. P subfamily.

Its subcellular location is the plastid. The protein localises to the chloroplast. In terms of biological role, may play a role in embryogenesis. The protein is Pentatricopeptide repeat-containing protein At1g30610, chloroplastic (EMB2279) of Arabidopsis thaliana (Mouse-ear cress).